Reading from the N-terminus, the 189-residue chain is uncharacterized protein (189 aa).

3 helical membrane passes run 2 to 22 (LVVV…HHLL), 93 to 113 (ILFY…YFIL), and 116 to 136 (FYST…LHTL).

It localises to the membrane. This is an uncharacterized protein from Schizosaccharomyces pombe (strain 972 / ATCC 24843) (Fission yeast).